The chain runs to 344 residues: Heat-inducible transcription repressor HrcA (344 aa).

This sequence belongs to the HrcA family.

In terms of biological role, negative regulator of class I heat shock genes (grpE-dnaK-dnaJ and groELS operons). Prevents heat-shock induction of these operons. The chain is Heat-inducible transcription repressor HrcA from Streptococcus pneumoniae serotype 19F (strain G54).